The following is a 552-amino-acid chain: Chaperonin GroEL (552 aa).

ATP is bound by residues 29-32 (TAGP), lysine 50, 86-90 (DGTTT), glycine 417, and aspartate 499.

This sequence belongs to the chaperonin (HSP60) family. Forms a cylinder of 14 subunits composed of two heptameric rings stacked back-to-back. Interacts with the co-chaperonin GroES.

The protein resides in the cytoplasm. It carries out the reaction ATP + H2O + a folded polypeptide = ADP + phosphate + an unfolded polypeptide.. Together with its co-chaperonin GroES, plays an essential role in assisting protein folding. The GroEL-GroES system forms a nano-cage that allows encapsulation of the non-native substrate proteins and provides a physical environment optimized to promote and accelerate protein folding. The chain is Chaperonin GroEL from Ehrlichia canis (strain Jake).